Reading from the N-terminus, the 385-residue chain is Prostacyclin receptor (385 aa).

Topologically, residues 1 to 16 (MADSCRNLTYVRDSVG) are extracellular. Cystine bridges form between C5–C165 and C92–C170. Residue N7 is glycosylated (N-linked (GlcNAc...) asparagine). The helical transmembrane segment at 17 to 38 (PATSTLMFVAGVVGNGLALGIL) threads the bilayer. Residues 39–51 (GARRHSRPSAFAV) are Cytoplasmic-facing. A helical transmembrane segment spans residues 52-76 (LVTGLGVTDLLGTCFLSPAVFAAYA). At 77 to 94 (RNSSLLGLARGRPALCDA) the chain is on the extracellular side. Residues 95–115 (FAFAMTFFGLASTLILFAMAV) traverse the membrane as a helical segment. Topologically, residues 116 to 134 (ERCLALSHPYLYAQLDGPR) are cytoplasmic. A helical transmembrane segment spans residues 135-158 (RARLALPAIYAFCTIFCSLPFLGL). At 159-181 (GQHQQYCPGSWCFIRMRSAEPGG) the chain is on the extracellular side. The helical transmembrane segment at 182 to 208 (CAFLLAYASLVALLVAAIVLCNGSVTL) threads the bilayer. The Cytoplasmic portion of the chain corresponds to 209 to 234 (SLCRMYRQQRRHQARCPRPRAGEDEV). Residues 235–259 (DHLILLALMTGIMAVCSLPLTPQIR) traverse the membrane as a helical segment. The Extracellular segment spans residues 260–273 (GFTQAIAPDSSEMG). The chain crosses the membrane as a helical span at residues 274–294 (DLLAFRFNAFNPILDPWVFIL). The Cytoplasmic portion of the chain corresponds to 295–385 (FRKSVFQRLK…AGSEAACSLC (91 aa)). Residues 315–344 (AQGDSRTSLSQSASGRKDSSAPPALEGKKG) are disordered. Over residues 318–328 (DSRTSLSQSAS) the composition is skewed to polar residues. Residue C382 is modified to Cysteine methyl ester. The S-farnesyl cysteine moiety is linked to residue C382. Residues 383–385 (SLC) constitute a propeptide, removed in mature form.

This sequence belongs to the G-protein coupled receptor 1 family. As to quaternary structure, interacts (non-isoprenylated C-terminus) with PDZK1. Post-translationally, isoprenylation does not influence ligand binding but is required for efficient coupling to the effectors adenylyl cyclase and phospholipase C.

The protein localises to the cell membrane. In terms of biological role, receptor for prostacyclin (prostaglandin I2 or PGI2). The activity of this receptor is mediated by G(s) proteins which activate adenylate cyclase. The protein is Prostacyclin receptor (PTGIR) of Bos taurus (Bovine).